Consider the following 306-residue polypeptide: Large ribosomal subunit protein bL19m (306 aa).

The span at 34 to 43 shows a compositional bias: basic and acidic residues; that stretch reads ENQEEQKKEA. A disordered region spans residues 34–53; it reads ENQEEQKKEAPPTTPTSPVN.

It belongs to the bacterial ribosomal protein bL19 family. In terms of assembly, component of the mitochondrial ribosome large subunit (39S) which comprises a 16S rRNA and about 50 distinct proteins.

It is found in the mitochondrion. This chain is Large ribosomal subunit protein bL19m (mRpL19), found in Drosophila melanogaster (Fruit fly).